A 1102-amino-acid polypeptide reads, in one-letter code: DNA-directed RNA polymerase subunit beta (1102 aa).

Residues 1076–1102 are disordered; it reads IDSQRRAPNRPTYESLHTEEDLEEEEV.

Belongs to the RNA polymerase beta chain family. As to quaternary structure, in cyanobacteria the RNAP catalytic core is composed of 2 alpha, 1 beta, 1 beta', 1 gamma and 1 omega subunit. When a sigma factor is associated with the core the holoenzyme is formed, which can initiate transcription.

The enzyme catalyses RNA(n) + a ribonucleoside 5'-triphosphate = RNA(n+1) + diphosphate. Functionally, DNA-dependent RNA polymerase catalyzes the transcription of DNA into RNA using the four ribonucleoside triphosphates as substrates. The sequence is that of DNA-directed RNA polymerase subunit beta from Synechocystis sp. (strain ATCC 27184 / PCC 6803 / Kazusa).